A 151-amino-acid polypeptide reads, in one-letter code: Probable transcriptional regulator syrB2 (151 aa).

The interval Met1–Lys61 is disordered. Positions Ala11 to Pro23 are enriched in low complexity. Over residues Ala24–Lys35 the composition is skewed to basic residues.

The protein belongs to the SyrB family.

Its function is as follows. Seems to affect the transcription of cya3. May be negatively autoregulated. The polypeptide is Probable transcriptional regulator syrB2 (syrB2) (Rhizobium meliloti (strain 1021) (Ensifer meliloti)).